A 345-amino-acid polypeptide reads, in one-letter code: Adenine deaminase (345 aa).

Zn(2+) is bound by residues histidine 20, histidine 22, and histidine 204. Glutamate 207 serves as the catalytic Proton donor. Aspartate 285 serves as a coordination point for Zn(2+). Aspartate 286 lines the substrate pocket.

It belongs to the metallo-dependent hydrolases superfamily. Adenosine and AMP deaminases family. Adenine deaminase type 2 subfamily. Requires Zn(2+) as cofactor.

It catalyses the reaction adenine + H2O + H(+) = hypoxanthine + NH4(+). In terms of biological role, catalyzes the hydrolytic deamination of adenine to hypoxanthine. Plays an important role in the purine salvage pathway and in nitrogen catabolism. This chain is Adenine deaminase, found in Ralstonia pickettii (strain 12J).